Here is a 263-residue protein sequence, read N- to C-terminus: Acyl-[acyl-carrier-protein]--UDP-N-acetylglucosamine O-acyltransferase (263 aa).

The protein belongs to the transferase hexapeptide repeat family. LpxA subfamily. In terms of assembly, homotrimer.

Its subcellular location is the cytoplasm. The catalysed reaction is a (3R)-hydroxyacyl-[ACP] + UDP-N-acetyl-alpha-D-glucosamine = a UDP-3-O-[(3R)-3-hydroxyacyl]-N-acetyl-alpha-D-glucosamine + holo-[ACP]. It participates in glycolipid biosynthesis; lipid IV(A) biosynthesis; lipid IV(A) from (3R)-3-hydroxytetradecanoyl-[acyl-carrier-protein] and UDP-N-acetyl-alpha-D-glucosamine: step 1/6. Functionally, involved in the biosynthesis of lipid A, a phosphorylated glycolipid that anchors the lipopolysaccharide to the outer membrane of the cell. The polypeptide is Acyl-[acyl-carrier-protein]--UDP-N-acetylglucosamine O-acyltransferase (Xanthomonas campestris pv. campestris (strain 8004)).